We begin with the raw amino-acid sequence, 122 residues long: Large ribosomal subunit protein uL14 (122 aa).

Belongs to the universal ribosomal protein uL14 family. In terms of assembly, part of the 50S ribosomal subunit. Forms a cluster with proteins L3 and L19. In the 70S ribosome, L14 and L19 interact and together make contacts with the 16S rRNA in bridges B5 and B8.

Its function is as follows. Binds to 23S rRNA. Forms part of two intersubunit bridges in the 70S ribosome. This chain is Large ribosomal subunit protein uL14, found in Pseudothermotoga lettingae (strain ATCC BAA-301 / DSM 14385 / NBRC 107922 / TMO) (Thermotoga lettingae).